The primary structure comprises 127 residues: MMSSDQQFFLKWNDFQTNMVTSFRHLRDEKSFTDVTLACEGQTCKAHKMVLSACSPYFKALLEENPSKHPIIILKDVSYIHLQAILEFMYAGEVNVSQEQLPAFLKTADRLKVKGLAETPSSIKREG.

Positions 33–98 constitute a BTB domain; that stretch reads TDVTLACEGQ…MYAGEVNVSQ (66 aa).

As to quaternary structure, the BTB domain interacts with the BTB domain of Trl in vitro. Found in a Pc-containing complex.

The protein resides in the nucleus. In terms of biological role, required, together with Trl, for maintaining the repressed state of target genes including homeotic genes Scr and Ubx. May also be involved in the activation of homeotic genes. Binds to a DNA Polycomb response element (PRE) at the bithorax complex. Also binds to polytene chromosomes at several hundred sites, many of which are shared with Trl and ph-p. Required during embryonic development. This chain is Longitudinals lacking protein-like, found in Drosophila melanogaster (Fruit fly).